Reading from the N-terminus, the 198-residue chain is Peroxiredoxin-2 (198 aa).

Ala-2 is modified (N-acetylalanine). The 159-residue stretch at 6–164 (AQIGKSAPDF…ALRLVQAFQY (159 aa)) folds into the Thioredoxin domain. Ser-11 is subject to Phosphoserine. The active-site Cysteine sulfenic acid (-SOH) intermediate is Cys-51. A Phosphoserine modification is found at Ser-112. The residue at position 182 (Thr-182) is a Phosphothreonine. N6-acetyllysine is present on Lys-196.

This sequence belongs to the peroxiredoxin family. AhpC/Prx1 subfamily. In terms of assembly, homodimer; disulfide-linked, upon oxidation. 5 homodimers assemble to form a ring-like decamer. Interacts with TIPIN. Post-translationally, the enzyme can be inactivated by further oxidation of the cysteine sulfenic acid (C(P)-SOH) to sulphinic acid (C(P)-SO2H) instead of its condensation to a disulfide bond. It can be reactivated by forming a transient disulfide bond with sulfiredoxin SRXN1, which reduces the cysteine sulfinic acid in an ATP- and Mg-dependent manner. In terms of processing, acetylation increases resistance to transition to high molecular-mass complexes. Deacetylated by HDAC6 which decreases reducing activity. In terms of tissue distribution, widely expressed with highest levels in bone marrow. High levels also found in heart, brain, kidney and skeletal muscle. Lower levels in liver, lung and thymus.

It localises to the cytoplasm. It catalyses the reaction a hydroperoxide + [thioredoxin]-dithiol = an alcohol + [thioredoxin]-disulfide + H2O. Functionally, thiol-specific peroxidase that catalyzes the reduction of hydrogen peroxide and organic hydroperoxides to water and alcohols, respectively. Plays a role in cell protection against oxidative stress by detoxifying peroxides and as sensor of hydrogen peroxide-mediated signaling events. Might participate in the signaling cascades of growth factors and tumor necrosis factor-alpha by regulating the intracellular concentrations of H(2)O(2). The protein is Peroxiredoxin-2 (Prdx2) of Mus musculus (Mouse).